The chain runs to 239 residues: Demethylmenaquinone methyltransferase (239 aa).

Residues threonine 68, aspartate 86, and 111–112 (NG) contribute to the S-adenosyl-L-methionine site.

This sequence belongs to the class I-like SAM-binding methyltransferase superfamily. MenG/UbiE family.

The catalysed reaction is a 2-demethylmenaquinol + S-adenosyl-L-methionine = a menaquinol + S-adenosyl-L-homocysteine + H(+). The protein operates within quinol/quinone metabolism; menaquinone biosynthesis; menaquinol from 1,4-dihydroxy-2-naphthoate: step 2/2. Functionally, methyltransferase required for the conversion of demethylmenaquinol (DMKH2) to menaquinol (MKH2). This Tropheryma whipplei (strain TW08/27) (Whipple's bacillus) protein is Demethylmenaquinone methyltransferase.